A 131-amino-acid polypeptide reads, in one-letter code: UPF0342 protein DSY1594 (131 aa).

It belongs to the UPF0342 family.

This is UPF0342 protein DSY1594 from Desulfitobacterium hafniense (strain Y51).